The chain runs to 1080 residues: MSMDHQDLKRRDPPADSESQRPSKKISLSSSEASVPIGGPPIDQNLILFQNRAMKVRVEEQKIEINDREQKIKQLNTKIHQYKENISCLCRVWDQLNSGLDLLINRVDFENAMDNLLPKDNITESFEFLSSYITEPVTLDEKYTLDQSLQKKVQKTQSTFSKISKALEKEHTLSKFVFRLLKSKDGIKSNDIEKLLKEDNDKLSKQNQYIQNIYDKVQIQFKQLTDQTTHLADQAAIYQQNNKELKLELEKSQDELTIERKRVIKLQDETLRTPQVKIPSPSLGSNIPGGANNNNNNNNNSNNNNNINNNGNNMGGSGSSSLASSTNGINKQQSNDINGKELTHEELIAELQRQSDSRLLEARKLREEKAILLKELQQIQIDIRVIPEERIQNSMPYQVLRQRYQLVSDELDIHRNQCTKLQNDLAQATIGRRLEREALEAFEAHRRQNIERRVSQLEVESIELKGEKEKLVCLIEQRNPNVPSLQYIQESRLLLDKKDDEIKQLRKEIEQLKLDIEKYKAPKEEIERYKLLVQRDVESKNIEINKLLEKINTITKQNNDLKSNEQQLLQKESELTLSLNILKSNKNNININNLDKDNIEDNSKIKQQQEQQQQQHQKIDNNNKKEEEIKKEQQQQQQQQQQQQQQQQQQQQQQQQQQQQQQQQQQQQQQQQQQQQQQQEEQKKDKEMIDIEKSTENIINNNNNNNTNEQKLNEINKNIENGNNENNNNNENTINNENTINNNNNENKDKIIFNLELNESKLKLELSTVKKQLEDITKSKEEYDNEIKEINEKFKAQIKELDITISQNKIQQESQKQELEALVMEIDSMGKAYEQMLEQNTRLTKQLSDKEDTHAHLMAENIKSQQTIRNSKEIQLAIEEKLNRNEEKLKSQGELMQKIEEKSNILQKQLSKVTEDLHSCSFDLEKHKRFVRENNAHSLELKTQLDHLSNLNAELKKKADDSIFALEREIDKAKRLDEEKQLLKKKLEKATSANNNNNNNNNNNNNNNNNNSSSSEEELKLINQRLRCTICNDRQKNYVIAKCFHVFCKECIYSNIDTRKRRCPSCNRAFAETDVHQIYY.

The span at 1 to 21 (MSMDHQDLKRRDPPADSESQR) shows a compositional bias: basic and acidic residues. Residues 1–37 (MSMDHQDLKRRDPPADSESQRPSKKISLSSSEASVPI) are disordered. Low complexity predominate over residues 25-34 (KISLSSSEAS). 3 coiled-coil regions span residues 50 to 91 (QNRA…CLCR), 149 to 169 (LQKK…ALEK), and 196 to 269 (LKED…LQDE). 3 disordered regions span residues 274–335 (PQVK…QQSN), 721–742 (NGNN…TINN), and 991–1016 (TSAN…SSSE). 2 stretches are compositionally biased toward low complexity: residues 284-312 (GSNI…NNGN) and 319-330 (SSSLASSTNGIN). Residues 331–1003 (KQQSNDINGK…NNNNNNNNNN (673 aa)) adopt a coiled-coil conformation. A compositionally biased stretch (low complexity) spans 994-1014 (NNNNNNNNNNNNNNNNNNSSS). The RING-type zinc-finger motif lies at 1028–1067 (CTICNDRQKNYVIAKCFHVFCKECIYSNIDTRKRRCPSCN).

This sequence belongs to the BRE1 family.

Its subcellular location is the nucleus. It catalyses the reaction S-ubiquitinyl-[E2 ubiquitin-conjugating enzyme]-L-cysteine + [acceptor protein]-L-lysine = [E2 ubiquitin-conjugating enzyme]-L-cysteine + N(6)-ubiquitinyl-[acceptor protein]-L-lysine.. It participates in protein modification; protein ubiquitination. In terms of biological role, E3 ubiquitin-protein ligase that mediates monoubiquitination of histone H2B. This chain is Probable E3 ubiquitin-protein ligase bre1 (bre1), found in Dictyostelium discoideum (Social amoeba).